Here is a 192-residue protein sequence, read N- to C-terminus: Sarcoplasmic calcium-binding protein, beta chain (192 aa).

At A1 the chain carries N-acetylalanine. 4 EF-hand domains span residues 4-39 (WDNR…VTLI), 56-91 (IMAN…NCKG), 100-135 (AFKV…RSAF), and 136-171 (ADVK…YAQF). Residues D17, D19, D21, D28, D69, N71, D73, E75, E80, D113, D115, D117, M119, and E124 each coordinate Ca(2+).

In terms of assembly, SCPs from crayfish, lobster, and shrimp are polymorphic dimers; three isotypes (alpha-alpha, alpha-beta, and beta-beta) have been identified.

Its function is as follows. Like parvalbumins, SCPs seem to be more abundant in fast contracting muscles, but no functional relationship can be established from this distribution. This chain is Sarcoplasmic calcium-binding protein, beta chain, found in Penaeus sp. (Penoeid shrimp).